Consider the following 453-residue polypeptide: mRNA cleavage and polyadenylation factor CLP1 (453 aa).

ATP-binding positions include glutamate 31, lysine 70, and 146–151 (NSGKTS).

Belongs to the Clp1 family. Clp1 subfamily. Component of a pre-mRNA cleavage factor complex. Interacts directly with PCF11.

It localises to the nucleus. In terms of biological role, required for endonucleolytic cleavage during polyadenylation-dependent pre-mRNA 3'-end formation. The protein is mRNA cleavage and polyadenylation factor CLP1 of Scheffersomyces stipitis (strain ATCC 58785 / CBS 6054 / NBRC 10063 / NRRL Y-11545) (Yeast).